A 647-amino-acid polypeptide reads, in one-letter code: Protein FAM161B (647 aa).

Disordered regions lie at residues 1 to 39, 89 to 110, and 135 to 167; these read MTVG…GDGL, SDPE…FFQD, and LNNL…SWAS. Positions 91–105 are enriched in acidic residues; the sequence is PESDENLSEDEEDLE. The stretch at 262 to 292 forms a coiled coil; sequence LEKEEQLKEAARQRDLAATAEAKISKQKATR. A compositionally biased stretch (polar residues) spans 332 to 350; it reads PIASSSNRANPQPRTATRT. Disordered stretches follow at residues 332–352 and 388–439; these read PIAS…RTQQ and KRRE…RSRS. Positions 510–546 form a coiled coil; it reads LEEVFKAKLKENRNNDRKRAKEYKKELEEMKQRIQTR. Positions 583–647 are disordered; that stretch reads KGQGTRAVQE…QSPENLVSLA (65 aa). Residues 590–602 are compositionally biased toward basic and acidic residues; sequence VQEKETKIKDFPR. Polar residues predominate over residues 637–647; that stretch reads HQSPENLVSLA.

This sequence belongs to the FAM161 family. As to quaternary structure, interacts with FAM161A. Ubiquitously expressed.

The polypeptide is Protein FAM161B (FAM161B) (Homo sapiens (Human)).